We begin with the raw amino-acid sequence, 318 residues long: Thymidylate synthase (318 aa).

DUMP-binding positions include Arg-25 and 180–181 (RR). The Nucleophile role is filled by Cys-200. DUMP-binding positions include 220–223 (RSGD), Asn-231, and 261–263 (HIY). Residue Asp-223 participates in (6R)-5,10-methylene-5,6,7,8-tetrahydrofolate binding. (6R)-5,10-methylene-5,6,7,8-tetrahydrofolate is bound at residue Ala-317.

It belongs to the thymidylate synthase family. Bacterial-type ThyA subfamily. Homodimer.

The protein resides in the cytoplasm. It catalyses the reaction dUMP + (6R)-5,10-methylene-5,6,7,8-tetrahydrofolate = 7,8-dihydrofolate + dTMP. The protein operates within pyrimidine metabolism; dTTP biosynthesis. Catalyzes the reductive methylation of 2'-deoxyuridine-5'-monophosphate (dUMP) to 2'-deoxythymidine-5'-monophosphate (dTMP) while utilizing 5,10-methylenetetrahydrofolate (mTHF) as the methyl donor and reductant in the reaction, yielding dihydrofolate (DHF) as a by-product. This enzymatic reaction provides an intracellular de novo source of dTMP, an essential precursor for DNA biosynthesis. The sequence is that of Thymidylate synthase from Bacillus cereus (strain ATCC 10987 / NRS 248).